A 115-amino-acid polypeptide reads, in one-letter code: Virulence-associated protein A' (115 aa).

Residues 16–70 enclose the HTH cro/C1-type domain; that stretch reads IKSDLDGLGINITEAAKALDVTRAALSEIINGKRGISAKMAWKLSKAFTNSDPEF. The H-T-H motif DNA-binding region spans 27–46; it reads ITEAAKALDVTRAALSEIIN.

It belongs to the VapA/VapI family.

The polypeptide is Virulence-associated protein A' (vapA') (Dichelobacter nodosus (Bacteroides nodosus)).